Reading from the N-terminus, the 172-residue chain is Transmembrane protein 91 (172 aa).

The Extracellular portion of the chain corresponds to 1–97; sequence MDNSSIQELQ…SPLLPHDHLG (97 aa). The disordered stretch occupies residues 60–86; sequence GLGEPETPDFEDTLSSDSDSDDDGGDR. The segment covering 65 to 83 has biased composition (acidic residues); it reads ETPDFEDTLSSDSDSDDDG. Residues 98–118 traverse the membrane as a helical segment; the sequence is LAVFSVLCCFWPVGIAAFCLA. At 119-139 the chain is on the cytoplasmic side; it reads HKTNKAWAKGDVQGAGAASRR. Residues 140–160 traverse the membrane as a helical segment; that stretch reads AFLLGVLAVGLGLCTYAAALV. Over 161–172 the chain is Extracellular; the sequence is TLAAYLASRDPP.

It belongs to the CD225/Dispanin family.

It localises to the membrane. The protein is Transmembrane protein 91 (Tmem91) of Mus musculus (Mouse).